Consider the following 628-residue polypeptide: Probable alpha-L-arabinofuranosidase A (628 aa).

The signal sequence occupies residues 1–25; sequence MVAFSALSGVSAVSLLLSLVQNAHG. 10 N-linked (GlcNAc...) asparagine glycosylation sites follow: Asn-36, Asn-51, Asn-74, Asn-152, Asn-171, Asn-260, Asn-359, Asn-440, Asn-493, and Asn-610.

It belongs to the glycosyl hydrolase 51 family.

It is found in the secreted. It carries out the reaction Hydrolysis of terminal non-reducing alpha-L-arabinofuranoside residues in alpha-L-arabinosides.. Its pathway is glycan metabolism; L-arabinan degradation. Alpha-L-arabinofuranosidase involved in the degradation of arabinoxylan, a major component of plant hemicellulose. Acts only on small linear 1,5-alpha-linked L-arabinofuranosyl oligosaccharides. The chain is Probable alpha-L-arabinofuranosidase A (abfA) from Aspergillus niger (strain ATCC MYA-4892 / CBS 513.88 / FGSC A1513).